We begin with the raw amino-acid sequence, 246 residues long: Large ribosomal subunit protein uL30-like 1 (246 aa).

Phosphoserine is present on Ser54.

It belongs to the universal ribosomal protein uL30 family.

The protein is Large ribosomal subunit protein uL30-like 1 (RPL7L1) of Pongo abelii (Sumatran orangutan).